A 380-amino-acid chain; its full sequence is Cytochrome b (380 aa).

4 consecutive transmembrane segments (helical) span residues 34–54, 78–99, 114–134, and 179–199; these read FGSLLGICLATQILTGLLLAA, WLIRNLHANGASFFFICIYLHI, WNTGVILLLTLMATAFVGYVL, and FFTLHFLLPFMIMGLTLIHLT. The heme b site is built by His-84 and His-98. Heme b is bound by residues His-183 and His-197. His-202 lines the a ubiquinone pocket. 4 helical membrane passes run 227 to 247, 289 to 309, 321 to 341, and 348 to 368; these read LKDILGFMLMLFPLMTLALFS, LGGVLALAASVLILFLAPLLH, FSQLLFWTLAANLLILTWVGS, and FIIIGQLASLTYFTILLILFP.

Belongs to the cytochrome b family. As to quaternary structure, the cytochrome bc1 complex contains 11 subunits: 3 respiratory subunits (MT-CYB, CYC1 and UQCRFS1), 2 core proteins (UQCRC1 and UQCRC2) and 6 low-molecular weight proteins (UQCRH/QCR6, UQCRB/QCR7, UQCRQ/QCR8, UQCR10/QCR9, UQCR11/QCR10 and a cleavage product of UQCRFS1). This cytochrome bc1 complex then forms a dimer. Heme b is required as a cofactor.

The protein resides in the mitochondrion inner membrane. Component of the ubiquinol-cytochrome c reductase complex (complex III or cytochrome b-c1 complex) that is part of the mitochondrial respiratory chain. The b-c1 complex mediates electron transfer from ubiquinol to cytochrome c. Contributes to the generation of a proton gradient across the mitochondrial membrane that is then used for ATP synthesis. This chain is Cytochrome b (MT-CYB), found in Antigone vipio (White-naped crane).